Here is a 64-residue protein sequence, read N- to C-terminus: Large ribosomal subunit protein bL32 (64 aa).

Basic residues predominate over residues Met1–Pro10. A disordered region spans residues Met1–Lys22. Over residues Ser11 to Lys22 the composition is skewed to basic and acidic residues.

This sequence belongs to the bacterial ribosomal protein bL32 family.

In Sorangium cellulosum (strain So ce56) (Polyangium cellulosum (strain So ce56)), this protein is Large ribosomal subunit protein bL32.